Here is an 835-residue protein sequence, read N- to C-terminus: Protein translocase subunit SecA 1 (835 aa).

Residues Gln85, 103-107, and Asp492 contribute to the ATP site; that span reads GEGKT. Residues 788–807 are disordered; it reads VQGEAVHPSSDGEEAKKKPV. Residues Cys819, Cys821, Cys830, and Cys831 each contribute to the Zn(2+) site.

It belongs to the SecA family. As to quaternary structure, monomer and homodimer. Part of the essential Sec protein translocation apparatus which comprises SecA, SecYEG and auxiliary proteins SecDF. Other proteins may also be involved. It depends on Zn(2+) as a cofactor.

Its subcellular location is the cell membrane. It localises to the cytoplasm. It catalyses the reaction ATP + H2O + cellular proteinSide 1 = ADP + phosphate + cellular proteinSide 2.. Functionally, part of the Sec protein translocase complex. Interacts with the SecYEG preprotein conducting channel. Has a central role in coupling the hydrolysis of ATP to the transfer of proteins into and across the cell membrane, serving as an ATP-driven molecular motor driving the stepwise translocation of polypeptide chains across the membrane. The sequence is that of Protein translocase subunit SecA 1 from Bacillus anthracis.